The primary structure comprises 329 residues: Probable ABC transporter permease protein MG188 (329 aa).

The next 6 helical transmembrane spans lie at 30-50 (FLLFLPALLTTILFTIIPFFL), 96-116 (LISLPFSIIIAIVIASAIVFV), 128-148 (VFFLPYVTSGVAISIAFVYIF), 176-196 (ALWAILIFGVWKNLAFNVLII), 234-254 (LIFLTTLLILGGMQVFPLALF), and 283-303 (NLAGAATLVLFVLGVCYGLVL). An ABC transmembrane type-1 domain is found at 88 to 303 (LRNSFLYSLI…VLGVCYGLVL (216 aa)).

Belongs to the binding-protein-dependent transport system permease family. MalFG subfamily.

It localises to the cell membrane. Functionally, probably part of a binding-protein-dependent transport system. Probably responsible for the translocation of the substrate across the membrane. The polypeptide is Probable ABC transporter permease protein MG188 (Mycoplasma genitalium (strain ATCC 33530 / DSM 19775 / NCTC 10195 / G37) (Mycoplasmoides genitalium)).